Reading from the N-terminus, the 656-residue chain is Chaperone protein DnaK (656 aa).

The segment covering 590–605 (GGAAGGAAGGAAGGAA) has biased composition (gly residues). The interval 590–656 (GGAAGGAAGG…DGQPKPGPAA (67 aa)) is disordered. Residues 606–621 (GDAAGAAGDSTGDAAG) are compositionally biased toward low complexity. Over residues 622–635 (AAGGPSEGPAGDAG) the composition is skewed to gly residues.

The protein belongs to the heat shock protein 70 family.

In terms of biological role, acts as a chaperone. The protein is Chaperone protein DnaK of Cenarchaeum symbiosum (strain A).